A 651-amino-acid chain; its full sequence is Acetyl-coenzyme A synthetase (651 aa).

CoA is bound by residues 190–193 (RGGK), Thr312, and Asn336. Residues 388 to 390 (GEP), 412 to 417 (DTWWQT), Asp501, and Arg516 each bind ATP. CoA is bound at residue Ser524. Residue Arg527 coordinates ATP. The Mg(2+) site is built by Val538, His540, and Val543. Residue Arg585 coordinates CoA. An N6-acetyllysine modification is found at Lys610.

Belongs to the ATP-dependent AMP-binding enzyme family. It depends on Mg(2+) as a cofactor. In terms of processing, acetylated. Deacetylation by the SIR2-homolog deacetylase activates the enzyme.

It carries out the reaction acetate + ATP + CoA = acetyl-CoA + AMP + diphosphate. Catalyzes the conversion of acetate into acetyl-CoA (AcCoA), an essential intermediate at the junction of anabolic and catabolic pathways. AcsA undergoes a two-step reaction. In the first half reaction, AcsA combines acetate with ATP to form acetyl-adenylate (AcAMP) intermediate. In the second half reaction, it can then transfer the acetyl group from AcAMP to the sulfhydryl group of CoA, forming the product AcCoA. This chain is Acetyl-coenzyme A synthetase, found in Mesorhizobium japonicum (strain LMG 29417 / CECT 9101 / MAFF 303099) (Mesorhizobium loti (strain MAFF 303099)).